The primary structure comprises 485 residues: Aspartyl/glutamyl-tRNA(Asn/Gln) amidotransferase subunit B (485 aa).

It belongs to the GatB/GatE family. GatB subfamily. Heterotrimer of A, B and C subunits.

It catalyses the reaction L-glutamyl-tRNA(Gln) + L-glutamine + ATP + H2O = L-glutaminyl-tRNA(Gln) + L-glutamate + ADP + phosphate + H(+). The catalysed reaction is L-aspartyl-tRNA(Asn) + L-glutamine + ATP + H2O = L-asparaginyl-tRNA(Asn) + L-glutamate + ADP + phosphate + 2 H(+). Functionally, allows the formation of correctly charged Asn-tRNA(Asn) or Gln-tRNA(Gln) through the transamidation of misacylated Asp-tRNA(Asn) or Glu-tRNA(Gln) in organisms which lack either or both of asparaginyl-tRNA or glutaminyl-tRNA synthetases. The reaction takes place in the presence of glutamine and ATP through an activated phospho-Asp-tRNA(Asn) or phospho-Glu-tRNA(Gln). The protein is Aspartyl/glutamyl-tRNA(Asn/Gln) amidotransferase subunit B of Anaplasma marginale (strain Florida).